Here is a 95-residue protein sequence, read N- to C-terminus: DNA-directed RNA polymerase subunit Rpo11 (95 aa).

It belongs to the archaeal Rpo11/eukaryotic RPB11/RPC19 RNA polymerase subunit family. In terms of assembly, part of the RNA polymerase complex.

The protein resides in the cytoplasm. The enzyme catalyses RNA(n) + a ribonucleoside 5'-triphosphate = RNA(n+1) + diphosphate. Its function is as follows. DNA-dependent RNA polymerase (RNAP) catalyzes the transcription of DNA into RNA using the four ribonucleoside triphosphates as substrates. The chain is DNA-directed RNA polymerase subunit Rpo11 from Methanococcus vannielii (strain ATCC 35089 / DSM 1224 / JCM 13029 / OCM 148 / SB).